Here is a 334-residue protein sequence, read N- to C-terminus: Formamidase (334 aa).

The CN hydrolase domain occupies 14–260 (FLVAAIQFPV…WEIVTGEIYP (247 aa)). Residue Glu60 is the Proton acceptor of the active site. The active-site Proton donor is Lys133. Cys166 acts as the Nucleophile in catalysis.

The protein belongs to the carbon-nitrogen hydrolase superfamily. Aliphatic amidase family.

The catalysed reaction is formamide + H2O = formate + NH4(+). In terms of biological role, is an aliphatic amidase with a restricted substrate specificity, as it only hydrolyzes formamide. The polypeptide is Formamidase (Helicobacter pylori (strain J99 / ATCC 700824) (Campylobacter pylori J99)).